Reading from the N-terminus, the 328-residue chain is Putative P2Y purinoceptor 10 (328 aa).

The Extracellular portion of the chain corresponds to 1–27 (MGSNSTSSAESNCNATYLPFQYSLYAT). Residues Asn4 and Asn14 are each glycosylated (N-linked (GlcNAc...) asparagine). Residues 28-48 (TYIFIFIPGLLANSAALWVLC) form a helical membrane-spanning segment. The Cytoplasmic segment spans residues 49–56 (RFISKKNK). A helical transmembrane segment spans residues 57 to 77 (AIIFMINLSVADLAHILSLPL). Residues 78-91 (RIYYYINRHWPFQR) lie on the Extracellular side of the membrane. The helical transmembrane segment at 92-112 (ALCLLCFYLKYLNMYASIFFL) threads the bilayer. A disulfide bridge links Cys94 with Cys170. The Cytoplasmic portion of the chain corresponds to 113–137 (TCISLQRCLFLLKPFRARNWKRRYD). The chain crosses the membrane as a helical span at residues 138 to 158 (VGISAVIWIVVGTACLPFPIL). The Extracellular portion of the chain corresponds to 159 to 182 (RNAGLANSTDSCFADLGYKQMDAV). Residues 183–203 (VLVTMVVIAELAGFVIPVITI) traverse the membrane as a helical segment. The Cytoplasmic segment spans residues 204–233 (ACCTWKTTVSLKHPPIAFQGISERKKALRM). Residues 234–254 (VFMCAAVFVICFTPYHINFIF) form a helical membrane-spanning segment. Residues 255-277 (YTMVKESIITSCPTVKSTLYFHP) are Extracellular-facing. Residues 278 to 298 (FSLCLASLCCLLDPILYYFMA) form a helical membrane-spanning segment. Over 299–328 (SEFRDQLSRHGSSVTRSRLMSRESGSSMVN) the chain is Cytoplasmic.

This sequence belongs to the G-protein coupled receptor 1 family.

The protein localises to the cell membrane. Functionally, putative receptor for purines coupled to G-proteins. The sequence is that of Putative P2Y purinoceptor 10 (P2ry10) from Mus musculus (Mouse).